Here is a 4588-residue protein sequence, read N- to C-terminus: Protocadherin Fat 1 (4588 aa).

A signal peptide spans 1-21; it reads MGRHLALLLLLLLLFQHFGDS. The Extracellular portion of the chain corresponds to 22 to 4181; sequence DGSQRLEQTP…STPWNIGLAE (4160 aa). Cadherin domains lie at 35–149 and 150–257; these read THLE…RPLF and SPTS…APVI. Residue Asn40 is glycosylated (N-linked (GlcNAc...) asparagine). The N-linked (GlcNAc...) asparagine glycan is linked to Asn333. 31 Cadherin domains span residues 368 to 463, 464 to 569, 570 to 673, 718 to 822, 823 to 927, 928 to 1034, 1035 to 1139, 1140 to 1245, 1246 to 1357, 1359 to 1456, 1457 to 1562, 1563 to 1667, 1668 to 1765, 1766 to 1879, 1880 to 1979, 1980 to 2081, 2082 to 2182, 2183 to 2283, 2284 to 2390, 2391 to 2492, 2493 to 2596, 2597 to 2703, 2704 to 2809, 2810 to 2918, 2919 to 3023, 3024 to 3125, 3126 to 3230, 3231 to 3335, 3336 to 3440, 3441 to 3545, and 3546 to 3647; these read EKDV…PPEF, TQTA…TPLF, EKIN…VNLQ, STLP…PPEF, LQES…PPTF, IPPN…PPVF, SSFV…APQT, SEPV…KPQF, LQKF…EPIS, EESF…RPQF, STSK…APWF, TASS…SPKF, TSKE…APVF, MQAE…PPVF, AKPL…HLKF, TQDV…APVF, VNLP…MPVF, EKPF…PPVF, AQQS…PPLF, EQQI…SPAF, LQNE…APQF, RATK…LPKF, SEPF…SPVF, ESSP…PPRF, TAEI…SPVC, EKTL…APEF, SADP…PPVF, EYRE…TPVF, SQDT…APVF, SRGN…PPAI, and LPLE…AIRF. Residues Asn660, Asn740, and Asn791 are each glycosylated (N-linked (GlcNAc...) asparagine). Asn998 carries an N-linked (GlcNAc...) asparagine glycan. N-linked (GlcNAc...) asparagine glycans are attached at residues Asn1426 and Asn1551. N-linked (GlcNAc...) asparagine glycosylation is found at Asn1748, Asn1864, Asn1902, Asn1940, and Asn1991. Asn2325 and Asn2464 each carry an N-linked (GlcNAc...) asparagine glycan. N-linked (GlcNAc...) asparagine glycans are attached at residues Asn3324, Asn3422, Asn3444, Asn3613, Asn3640, and Asn3716. Positions 3790–3827 constitute an EGF-like 1 domain; sequence VHHGCEDDPCPEGSECVSDPWEEKHTCVCPSGRFGQCP. 15 disulfides stabilise this stretch: Cys3794-Cys3805, Cys3799-Cys3816, Cys3818-Cys3826, Cys3976-Cys4009, Cys4017-Cys4028, Cys4022-Cys4038, Cys4040-Cys4049, Cys4056-Cys4067, Cys4061-Cys4076, Cys4078-Cys4087, Cys4093-Cys4104, Cys4098-Cys4113, Cys4115-Cys4124, Cys4131-Cys4142, and Cys4136-Cys4151. One can recognise a Laminin G-like domain in the interval 3829-4009; that stretch reads SSSMTLTGNS…EESVDVSPGC (181 aa). 3 consecutive EGF-like domains span residues 4013–4050, 4052–4088, and 4089–4125; these read ATEDCASNPCQNGGVCNPSPAGGYYCKCSALYIGTHCE, SVNPCSSKPCLYGGTCVVDNGGFVCQCRGLYTGQRCQ, and LSPYCKDEPCKNGGTCFDSLDGAVCQCDSGFRGERCQ. Residues 4127–4163 form the EGF-like 5; calcium-binding domain; the sequence is DIDECSGNPCLHGALCENTHGSYHCNCSHEYRGRHCE. Asn4152 carries N-linked (GlcNAc...) asparagine glycosylation. Cys4153 and Cys4162 are oxidised to a cystine. Residues 4182-4202 traverse the membrane as a helical segment; the sequence is GIGIVVFVAGIFLLVVVFVLC. The Cytoplasmic segment spans residues 4203–4588; it reads RKMISRKKKH…PLDSQQHTEV (386 aa). The Nuclear localization signal signature appears at 4204–4214; that stretch reads KMISRKKKHQA. Disordered regions lie at residues 4255-4275, 4303-4327, and 4343-4376; these read SYTPSIPSDSRNNLDRNSFEG, SVAPNLPPPPPSNSPSDSDSIQKPS, and LSKKPLEEKPSQPYSARESLSEVQSLSSFQSESC. Residues 4256-4265 show a composition bias toward polar residues; it reads YTPSIPSDSR. The segment covering 4363 to 4374 has biased composition (polar residues); the sequence is SEVQSLSSFQSE. The PTB-like motif motif lies at 4378 to 4382; that stretch reads DNGYH. Disordered stretches follow at residues 4435 to 4479 and 4565 to 4588; these read FPPP…SSSR and ESGDDGHFEEVTIPPLDSQQHTEV.

In terms of assembly, interacts (via the C-terminus 4300-4400 AA) with ATN1. Interacts with RERE. In terms of processing, undergoes proteolytic cleavage. The extracellular domain is cleaved off and the cytoplasmic domain (about 400 AA) shuttles to the nucleus. As to expression, expressed in many epithelial and some endothelial and smooth muscle cells.

It localises to the cell membrane. It is found in the nucleus. Its function is as follows. Plays an essential role for cellular polarization, directed cell migration and modulating cell-cell contact. This Homo sapiens (Human) protein is Protocadherin Fat 1 (FAT1).